Reading from the N-terminus, the 255-residue chain is Post-GPI attachment to proteins factor 2 (255 aa).

5 consecutive transmembrane segments (helical) span residues Leu23–Leu43, Leu111–Phe131, Asn143–Asn163, Leu185–Ser205, and Ala209–Phe229.

It belongs to the PGAP2 family.

Its subcellular location is the golgi apparatus membrane. The protein resides in the endoplasmic reticulum membrane. Its function is as follows. Involved in the lipid remodeling steps of GPI-anchor maturation. Required for stable expression of GPI-anchored proteins at the cell surface. In Drosophila melanogaster (Fruit fly), this protein is Post-GPI attachment to proteins factor 2.